Reading from the N-terminus, the 198-residue chain is Recombination protein RecR (198 aa).

The C4-type zinc finger occupies 57–72; the sequence is CSVCGHITENDPCYIC. A Toprim domain is found at 80–175; sequence SVICVVEDDK…KVTRLAQGLS (96 aa).

Belongs to the RecR family.

Its function is as follows. May play a role in DNA repair. It seems to be involved in an RecBC-independent recombinational process of DNA repair. It may act with RecF and RecO. The sequence is that of Recombination protein RecR from Staphylococcus epidermidis (strain ATCC 35984 / DSM 28319 / BCRC 17069 / CCUG 31568 / BM 3577 / RP62A).